The primary structure comprises 590 residues: Multidrug and toxin extrusion protein 1 (590 aa).

The Cytoplasmic segment spans residues methionine 1–leucine 59. The chain crosses the membrane as a helical span at residues alanine 60 to phenylalanine 80. The Extracellular portion of the chain corresponds to cysteine 81 to glutamate 88. Residues leucine 89 to glycine 109 form a helical membrane-spanning segment. The Cytoplasmic segment spans residues leucine 110–glycine 137. The chain crosses the membrane as a helical span at residues isoleucine 138–isoleucine 158. At leucine 159–asparagine 167 the chain is on the extracellular side. A helical transmembrane segment spans residues valine 168–methionine 188. Topologically, residues tyrosine 189–glutamine 199 are cytoplasmic. Residues glycine 200 to valine 222 form a helical membrane-spanning segment. The Extracellular segment spans residues phenylalanine 223–valine 231. The helical transmembrane segment at alanine 232 to arginine 254 threads the bilayer. At tryptophan 255–tryptophan 274 the chain is on the cytoplasmic side. The chain crosses the membrane as a helical span at residues glycine 275 to threonine 294. Topologically, residues tyrosine 295 to glutamine 313 are extracellular. A helical transmembrane segment spans residues serine 314–alanine 334. Topologically, residues serine 335–lysine 351 are cytoplasmic. Residues leucine 352 to isoleucine 372 form a helical membrane-spanning segment. At glycine 373 to glutamine 395 the chain is on the extracellular side. Residues valine 396 to isoleucine 416 form a helical membrane-spanning segment. Residues valine 417–asparagine 430 are Cytoplasmic-facing. The chain crosses the membrane as a helical span at residues isoleucine 431–methionine 451. Residue glycine 452 is a topological domain, extracellular. Residues isoleucine 453–isoleucine 473 form a helical membrane-spanning segment. The Cytoplasmic portion of the chain corresponds to leucine 474–glycine 565. The helical transmembrane segment at leucine 566–valine 586 threads the bilayer. At arginine 587–arginine 590 the chain is on the extracellular side.

It belongs to the multi antimicrobial extrusion (MATE) (TC 2.A.66.1) family.

It localises to the cell membrane. Solute transporter for tetraethylammonium (TEA), cimetidine, metformin, guanidine, N-methylnicotinamide (NMN) and also the zwitterionic cephalosporin cephalexin. Responsible for the secretion of cationic drugs across the brush border membranes. This Danio rerio (Zebrafish) protein is Multidrug and toxin extrusion protein 1 (slc47a1).